The chain runs to 376 residues: Pregnancy-associated glycoprotein 2 (376 aa).

A signal peptide spans Met-1–Cys-15. 2 N-linked (GlcNAc...) asparagine glycosylation sites follow: Asn-51 and Asn-71. Positions Tyr-68–Ala-373 constitute a Peptidase A1 domain. Residue Asp-86 is part of the active site. Cys-99 and Cys-104 form a disulfide bridge. Residues Asn-114, Asn-248, and Asn-252 are each glycosylated (N-linked (GlcNAc...) asparagine). A disulfide bridge links Cys-258 with Cys-262. The active site involves Asp-267. Cys-300 and Cys-333 are joined by a disulfide. Asn-343 is a glycosylation site (N-linked (GlcNAc...) asparagine).

The protein belongs to the peptidase A1 family. In terms of processing, N-Glycosylated; the glycans terminate in either N-acetyl-galactosamine (GalNAc) or N-acetyllactosamine. Terminal GalNAc on Asn-linked glycans is greatly reduced prior to parturition while lactosamine-type N-glycans remain unaltered. In terms of tissue distribution, trophoblast and placental tissue. Localized to both the mononucleate and binucleate cells of the trophectoderm.

The protein resides in the secreted. It localises to the extracellular space. Its function is as follows. PAG2 or a processed derivative of this molecule might represent a factor that binds the LH receptor. This chain is Pregnancy-associated glycoprotein 2 (PAG2), found in Bos taurus (Bovine).